Here is a 253-residue protein sequence, read N- to C-terminus: ATP synthase subunit b 1 (253 aa).

A helical transmembrane segment spans residues 5 to 27 (GWTVALQAVNFLILVLLLRHFLY).

Belongs to the ATPase B chain family. In terms of assembly, F-type ATPases have 2 components, F(1) - the catalytic core - and F(0) - the membrane proton channel. F(1) has five subunits: alpha(3), beta(3), gamma(1), delta(1), epsilon(1). F(0) has three main subunits: a(1), b(2) and c(10-14). The alpha and beta chains form an alternating ring which encloses part of the gamma chain. F(1) is attached to F(0) by a central stalk formed by the gamma and epsilon chains, while a peripheral stalk is formed by the delta and b chains.

The protein localises to the cell inner membrane. Its function is as follows. F(1)F(0) ATP synthase produces ATP from ADP in the presence of a proton or sodium gradient. F-type ATPases consist of two structural domains, F(1) containing the extramembraneous catalytic core and F(0) containing the membrane proton channel, linked together by a central stalk and a peripheral stalk. During catalysis, ATP synthesis in the catalytic domain of F(1) is coupled via a rotary mechanism of the central stalk subunits to proton translocation. Component of the F(0) channel, it forms part of the peripheral stalk, linking F(1) to F(0). The protein is ATP synthase subunit b 1 of Rhodospirillum centenum (strain ATCC 51521 / SW).